Here is a 594-residue protein sequence, read N- to C-terminus: Protein REBELOTE (594 aa).

Residues 1 to 13 (MGKLGKKARKFAK) are compositionally biased toward basic residues. 2 disordered regions span residues 1–21 (MGKLGKKARKFAKKNLQSVEK) and 35–58 (AKRNERHQAGDKQEKKVEQQPKKR). 3 short sequence motifs (nuclear localization signal) span residues 8–15 (ARKFAKKN), 35–42 (AKRNERHQ), and 512–519 (LKKFHERS). The segment covering 36–58 (KRNERHQAGDKQEKKVEQQPKKR) has biased composition (basic and acidic residues).

The protein belongs to the NOC2 family. In terms of assembly, interacts with SWA2, NOC2 and NOC3 in both the nucleolus and nucleoplasm. Binds to ENAP1 and OBE1. In terms of tissue distribution, expressed at low levels in roots, shoots, leaves, stems, inflorescences, flowers and siliques, with highest levels dividing tissues.

Its subcellular location is the nucleus. The protein localises to the nucleolus. It localises to the nucleoplasm. Collaboratively with CYP40/SQN and ULT1, influences floral meristem (FM) determinacy in an AGAMOUS and SUPERMAN-dependent manner, thus contributing to the floral developmental homeostasis. The protein is Protein REBELOTE of Arabidopsis thaliana (Mouse-ear cress).